The chain runs to 470 residues: Glucose-1-phosphate adenylyltransferase (470 aa).

Residues Gly164, 181–182 (EK), and Ser199 each bind alpha-D-glucose 1-phosphate.

This sequence belongs to the bacterial/plant glucose-1-phosphate adenylyltransferase family. As to quaternary structure, homotetramer.

It carries out the reaction alpha-D-glucose 1-phosphate + ATP + H(+) = ADP-alpha-D-glucose + diphosphate. It functions in the pathway glycan biosynthesis; glycogen biosynthesis. In terms of biological role, involved in the biosynthesis of ADP-glucose, a building block required for the elongation reactions to produce glycogen. Catalyzes the reaction between ATP and alpha-D-glucose 1-phosphate (G1P) to produce pyrophosphate and ADP-Glc. The polypeptide is Glucose-1-phosphate adenylyltransferase (Pseudarthrobacter chlorophenolicus (strain ATCC 700700 / DSM 12829 / CIP 107037 / JCM 12360 / KCTC 9906 / NCIMB 13794 / A6) (Arthrobacter chlorophenolicus)).